Reading from the N-terminus, the 133-residue chain is Sporulation-specific protein 2 (133 aa).

It belongs to the VPS13 family. In terms of assembly, interacts with spo13 and spo15.

It localises to the cytoplasm. The protein resides in the cytoskeleton. The protein localises to the microtubule organizing center. It is found in the spindle pole body. Involved in sporulation. Plays a significant role in modification of the spindle pole body prior to spore formation and is required for initiating forespore membrane formation. Assists in the localization of spo13 to the outer surface of the SPB. The protein is Sporulation-specific protein 2 (spo2) of Schizosaccharomyces pombe (strain 972 / ATCC 24843) (Fission yeast).